The chain runs to 188 residues: Pyridoxal 5'-phosphate synthase subunit PdxT (188 aa).

46–48 (GES) serves as a coordination point for L-glutamine. The active-site Nucleophile is the Cys-78. L-glutamine contacts are provided by residues Arg-105 and 134–135 (IR). Residues His-170 and Glu-172 each act as charge relay system in the active site.

Belongs to the glutaminase PdxT/SNO family. As to quaternary structure, in the presence of PdxS, forms a dodecamer of heterodimers. Only shows activity in the heterodimer.

The enzyme catalyses aldehydo-D-ribose 5-phosphate + D-glyceraldehyde 3-phosphate + L-glutamine = pyridoxal 5'-phosphate + L-glutamate + phosphate + 3 H2O + H(+). It catalyses the reaction L-glutamine + H2O = L-glutamate + NH4(+). The protein operates within cofactor biosynthesis; pyridoxal 5'-phosphate biosynthesis. Functionally, catalyzes the hydrolysis of glutamine to glutamate and ammonia as part of the biosynthesis of pyridoxal 5'-phosphate. The resulting ammonia molecule is channeled to the active site of PdxS. In Thermotoga neapolitana (strain ATCC 49049 / DSM 4359 / NBRC 107923 / NS-E), this protein is Pyridoxal 5'-phosphate synthase subunit PdxT.